The following is a 515-amino-acid chain: Cytochrome P450 monooxygenase paxP (515 aa).

The helical transmembrane segment at 20 to 36 (SLLWKLGVFAVLVYFLL) threads the bilayer. A heme-binding site is contributed by Cys-456.

The protein belongs to the cytochrome P450 family. The cofactor is heme.

It is found in the membrane. Its pathway is secondary metabolite biosynthesis. Its function is as follows. Cytochrome P450 monooxygenase; part of the ATM2 gene cluster that mediates the biosynthesis of paxilline, a mycotoxin that acts as an inhibitor of mammalian maxi-K channels. PaxG, the geranylgeranyl diphosphate (GGPP) synthase is proposed to catalyze the first step in paxilline biosynthesis. Condensation of indole-3-glycerol phosphate with GGPP by paxC then forms 3-geranylgeranylindole (3-GGI), followed by epoxidation and cyclization of this intermediate (by paxM and paxB) to form paspaline. Paspaline is subsequently converted to 13-desoxypaxilline by paxP, the latter being then converted to paxilline by paxQ. Finally paxilline can be mono- and di-prenylated by paxD. PaxP can also utilized beta-paxitriol and alpha-PC-M6 as substrates converting them to paxilline. This is Cytochrome P450 monooxygenase paxP from Penicillium paxilli.